The chain runs to 240 residues: Ribosomal RNA small subunit methyltransferase G (240 aa).

S-adenosyl-L-methionine is bound by residues Gly-79, Phe-84, 130–131 (AE), and Arg-149.

The protein belongs to the methyltransferase superfamily. RNA methyltransferase RsmG family.

It is found in the cytoplasm. Functionally, specifically methylates the N7 position of a guanine in 16S rRNA. This is Ribosomal RNA small subunit methyltransferase G from Lactobacillus helveticus (strain DPC 4571).